A 252-amino-acid polypeptide reads, in one-letter code: uncharacterized protein (252 aa).

10 repeat units span residues 68 to 82, 83 to 97, 98 to 112, 113 to 127, 128 to 142, 143 to 157, 158 to 172, 173 to 187, 188 to 202, and 203 to 217. The tract at residues 68-246 is 13 X 15 AA tandem repeats; the sequence is TYNQSQNVCP…LIDTYNQSQN (179 aa). An 11; truncated repeat occupies 218-230; sequence TYNQSQNVCPQDL. One copy of the 12; truncated repeat lies at 231–239; the sequence is NVYTQDLID. A 13; truncated repeat occupies 240–246; sequence TYNQSQN.

In terms of biological role, a protein probably derived from this gene is found in cuboidal crystalline inclusions, but is not toxic even when coexpressed with upstream ORF1. The protein runs anomalously as a 50 kDa band in gels. This is an uncharacterized protein from Bacillus thuringiensis subsp. kurstaki.